Consider the following 201-residue polypeptide: Kinetochore protein SPC24 homolog (201 aa).

The stretch at 78–133 (DIAAEDEIERLQKELDEEMEREFKLKDELRLVADELKDLNAQLSSIDEHKQSTKRK) forms a coiled coil.

The protein belongs to the SPC24 family. In terms of assembly, component of the NDC80 complex, which consists of NDC80, NUF2, SPC24 and SPC25. Highly expressed in actively dividing tissues, such as shoot apical meristem (SAM), root apical meristem (RAM), vasculature, newly emerging leaves and inflorescence shoots.

Its subcellular location is the chromosome. It is found in the centromere. Acts as a component of the essential kinetochore-associated NDC80 complex, which is required for chromosome segregation and spindle checkpoint activity to ensure proper cell division. Required for the maintenance of plant architecture. In Arabidopsis thaliana (Mouse-ear cress), this protein is Kinetochore protein SPC24 homolog.